Here is a 151-residue protein sequence, read N- to C-terminus: Ribosomal RNA large subunit methyltransferase H (151 aa).

S-adenosyl-L-methionine is bound by residues Gly-100 and 119–124 (LSKMTF).

This sequence belongs to the RNA methyltransferase RlmH family. As to quaternary structure, homodimer.

The protein resides in the cytoplasm. It carries out the reaction pseudouridine(1915) in 23S rRNA + S-adenosyl-L-methionine = N(3)-methylpseudouridine(1915) in 23S rRNA + S-adenosyl-L-homocysteine + H(+). Specifically methylates the pseudouridine at position 1915 (m3Psi1915) in 23S rRNA. The protein is Ribosomal RNA large subunit methyltransferase H of Thermotoga maritima (strain ATCC 43589 / DSM 3109 / JCM 10099 / NBRC 100826 / MSB8).